The sequence spans 285 residues: Ribosomal RNA small subunit methyltransferase A (285 aa).

The S-adenosyl-L-methionine site is built by asparagine 11, leucine 13, glycine 37, glutamate 57, aspartate 85, and asparagine 105.

Belongs to the class I-like SAM-binding methyltransferase superfamily. rRNA adenine N(6)-methyltransferase family. RsmA subfamily.

It localises to the cytoplasm. The catalysed reaction is adenosine(1518)/adenosine(1519) in 16S rRNA + 4 S-adenosyl-L-methionine = N(6)-dimethyladenosine(1518)/N(6)-dimethyladenosine(1519) in 16S rRNA + 4 S-adenosyl-L-homocysteine + 4 H(+). Its function is as follows. Specifically dimethylates two adjacent adenosines (A1518 and A1519) in the loop of a conserved hairpin near the 3'-end of 16S rRNA in the 30S particle. May play a critical role in biogenesis of 30S subunits. This Campylobacter curvus (strain 525.92) protein is Ribosomal RNA small subunit methyltransferase A.